Here is a 32-residue protein sequence, read N- to C-terminus: Snake venom serine proteinase (32 aa).

Residues Val1–Asn32 enclose the Peptidase S1 domain.

The protein belongs to the peptidase S1 family. Snake venom subfamily. As to quaternary structure, monomer. In terms of processing, contains 6 disulfide bonds. Glycosylated. In terms of tissue distribution, expressed by the venom gland.

Its subcellular location is the secreted. Cleaves a kininogen analog with the release of kallidin (lysyl-bradykinin). Completely cleaves fibrinogen Aalpha chain, partially cleaves Bbeta chain and has no activity on gamma chain. The polypeptide is Snake venom serine proteinase (Bitis arietans (African puff adder)).